Consider the following 438-residue polypeptide: Minor capsid protein p49 (438 aa).

The segment at 145 to 167 (NCLTQPSSLPSLKNPKNSSVPST) is disordered.

This sequence belongs to the asfivirus p49 structural protein family.

The protein localises to the virion. In terms of biological role, together with the penton and the other minor capsid proteins (M1249L, p17), forms a complicated network immediately below the outer capsid shell, stabilizing the whole capsid. Plays an essential role in the formation of infectious virus particles. Especially required for the formation of the capsid vertices. During virion assembly, associates with the membrane and probably mediates the docking of the penton complex to the inner membrane, where it recruits the capsomers to form the penton core. The chain is Minor capsid protein p49 from Ornithodoros (relapsing fever ticks).